The sequence spans 304 residues: Small ribosomal subunit biogenesis GTPase RsgA (304 aa).

In terms of domain architecture, CP-type G spans 70-229 (HNELNRPNIA…IADTPGFSKL (160 aa)). GTP contacts are provided by residues 119-122 (TKID) and 172-180 (GQTGVGKST). Zn(2+)-binding residues include Cys-253, Cys-259, His-261, and Cys-267.

Belongs to the TRAFAC class YlqF/YawG GTPase family. RsgA subfamily. As to quaternary structure, monomer. Associates with 30S ribosomal subunit, binds 16S rRNA. The cofactor is Zn(2+).

Its subcellular location is the cytoplasm. Its function is as follows. One of several proteins that assist in the late maturation steps of the functional core of the 30S ribosomal subunit. Helps release RbfA from mature subunits. May play a role in the assembly of ribosomal proteins into the subunit. Circularly permuted GTPase that catalyzes slow GTP hydrolysis, GTPase activity is stimulated by the 30S ribosomal subunit. This Phytoplasma mali (strain AT) protein is Small ribosomal subunit biogenesis GTPase RsgA.